We begin with the raw amino-acid sequence, 222 residues long: Phosphoglycolate phosphatase (222 aa).

The active-site Nucleophile is aspartate 8. Mg(2+) is bound by residues aspartate 8 and aspartate 10. Lysine 150 contacts substrate. Mg(2+)-binding residues include aspartate 173 and aspartate 177.

The protein belongs to the archaeal SPP-like hydrolase family. Mg(2+) is required as a cofactor.

It carries out the reaction 2-phosphoglycolate + H2O = glycolate + phosphate. In terms of biological role, catalyzes the dephosphorylation of 2-phosphoglycolate. The sequence is that of Phosphoglycolate phosphatase from Metallosphaera sedula (strain ATCC 51363 / DSM 5348 / JCM 9185 / NBRC 15509 / TH2).